The following is a 305-amino-acid chain: UDP-3-O-acyl-N-acetylglucosamine deacetylase (305 aa).

Residues His-78, His-237, and Asp-241 each contribute to the Zn(2+) site. The active-site Proton donor is His-264.

It belongs to the LpxC family. Zn(2+) is required as a cofactor.

It catalyses the reaction a UDP-3-O-[(3R)-3-hydroxyacyl]-N-acetyl-alpha-D-glucosamine + H2O = a UDP-3-O-[(3R)-3-hydroxyacyl]-alpha-D-glucosamine + acetate. It participates in glycolipid biosynthesis; lipid IV(A) biosynthesis; lipid IV(A) from (3R)-3-hydroxytetradecanoyl-[acyl-carrier-protein] and UDP-N-acetyl-alpha-D-glucosamine: step 2/6. Functionally, catalyzes the hydrolysis of UDP-3-O-myristoyl-N-acetylglucosamine to form UDP-3-O-myristoylglucosamine and acetate, the committed step in lipid A biosynthesis. The chain is UDP-3-O-acyl-N-acetylglucosamine deacetylase from Burkholderia lata (strain ATCC 17760 / DSM 23089 / LMG 22485 / NCIMB 9086 / R18194 / 383).